Consider the following 364-residue polypeptide: Protein Bop (364 aa).

The tract at residues 66-88 is disordered; the sequence is STASGTCGGKPAERGPLAGHMPS. The short motif at 114-128 is the BH3 element; it reads LDRFLAQLGDYMSFH. The tract at residues 258-364 is disordered; that stretch reads QLTKESTPGP…PGEPPLSPGF (107 aa). Composition is skewed to pro residues over residues 311–322 and 355–364; these read AQRPDPAHPGGP and PGEPPLSPGF.

As to quaternary structure, interacts (via BH3 domain) with VDAC1. Interacts with pro-survival Bcl-2 family members, BCL2, BCL2L1 isoform Bcl-X(L), MCL1, BCL2A1 and BCL2L2. Interacts with BAX and BAK1. As to expression, ubiquitously expressed.

The protein resides in the mitochondrion. Functionally, could induce apoptosis in a BH3 domain-dependent manner. The direct interaction network of Bcl-2 family members may play a key role in modulation RTL10/BOP intrinsic apoptotic signaling activity. The protein is Protein Bop of Homo sapiens (Human).